Here is a 639-residue protein sequence, read N- to C-terminus: Putative oxidoreductase UacF (639 aa).

5 4Fe-4S ferredoxin-type domains span residues 3–32 (KFIAAEAAECIGCHACEIACAVAHNQENWP), 47–77 (KGQAANPVACHHCNNAPCVTACPVNALTFQS), 78–107 (DSVQLDEQKCIGCKRCAIACPFGVVEMVDT), 110–139 (QKCDLCNQRSSGTQACIEVCPTQALRLMDD), and 201–235 (QQATYESDRCVYCAEKANCNWHCPLHNAIPDYIRL). [4Fe-4S] cluster contacts are provided by C12, C15, C18, C22, C56, C59, C64, C68, C87, C90, C93, C97, C112, C115, C125, C129, C210, C213, C219, and C223.

[4Fe-4S] cluster is required as a cofactor.

In terms of biological role, involved in formate-dependent uric acid degradation under microaerobic and anaerobic conditions. May reduce the enzymes necessary for uric acid degradation. The chain is Putative oxidoreductase UacF from Escherichia coli (strain K12).